An 858-amino-acid chain; its full sequence is Bifunctional uridylyltransferase/uridylyl-removing enzyme (858 aa).

Residues M1–L324 are uridylyltransferase. A uridylyl-removing region spans residues S325–L681. The HD domain maps to V443–L565. 2 consecutive ACT domains span residues Q682–S761 and I790–V858.

It belongs to the GlnD family. It depends on Mg(2+) as a cofactor.

The enzyme catalyses [protein-PII]-L-tyrosine + UTP = [protein-PII]-uridylyl-L-tyrosine + diphosphate. It catalyses the reaction [protein-PII]-uridylyl-L-tyrosine + H2O = [protein-PII]-L-tyrosine + UMP + H(+). Uridylyltransferase (UTase) activity is inhibited by glutamine, while glutamine activates uridylyl-removing (UR) activity. Functionally, modifies, by uridylylation and deuridylylation, the PII regulatory proteins (GlnB and homologs), in response to the nitrogen status of the cell that GlnD senses through the glutamine level. Under low glutamine levels, catalyzes the conversion of the PII proteins and UTP to PII-UMP and PPi, while under higher glutamine levels, GlnD hydrolyzes PII-UMP to PII and UMP (deuridylylation). Thus, controls uridylylation state and activity of the PII proteins, and plays an important role in the regulation of nitrogen assimilation and metabolism. The sequence is that of Bifunctional uridylyltransferase/uridylyl-removing enzyme from Burkholderia pseudomallei (strain 1106a).